Reading from the N-terminus, the 595-residue chain is UvrABC system protein C (595 aa).

One can recognise a GIY-YIG domain in the interval 17-94 (IEPGCYLMKD…IKQYQPRYNI (78 aa)). A UVR domain is found at 199–234 (KTILHNLEQKMQESSESLDFERAKEYRDLIQHIHNL).

The protein belongs to the UvrC family. As to quaternary structure, interacts with UvrB in an incision complex.

The protein localises to the cytoplasm. In terms of biological role, the UvrABC repair system catalyzes the recognition and processing of DNA lesions. UvrC both incises the 5' and 3' sides of the lesion. The N-terminal half is responsible for the 3' incision and the C-terminal half is responsible for the 5' incision. This Staphylococcus saprophyticus subsp. saprophyticus (strain ATCC 15305 / DSM 20229 / NCIMB 8711 / NCTC 7292 / S-41) protein is UvrABC system protein C.